A 348-amino-acid chain; its full sequence is MKIIQEIPERNIIKLIPENLDDLWHLSHIIQPYNAIYAVTERRTEDKGDKLRADRGTKRRVFLGIKAEKINFHEDFNRLRVSGKIIHAPDDIPIGSYHTIDIEPFLQVSVQKNWKKWDIERLKEAEDSSKKPKVVVVIMDDSEADIFLVREFGIKELASIKSGVSKKLDYKQNEQAKFSYYSDIINSISEFEGKILFAGPGFGRNNIQNYISEKYKSLAPNVVVESANHTGKSGLSEILKSGIIDKIYGEARISKETQVVEKLLEEISKKGLAAYGIESVNNAMNFSAIDTLLLTDEYLRRNRRSVENLMNSVENINGNIIIVSTEHDAGKQLKALGGISALLRFPIE.

The protein belongs to the eukaryotic release factor 1 family. Pelota subfamily. As to quaternary structure, monomer. A divalent metal cation serves as cofactor.

It localises to the cytoplasm. May function in recognizing stalled ribosomes, interact with stem-loop structures in stalled mRNA molecules, and effect endonucleolytic cleavage of the mRNA. May play a role in the release non-functional ribosomes and degradation of damaged mRNAs. Has endoribonuclease activity. This is Protein pelota homolog from Methanococcus maripaludis (strain DSM 14266 / JCM 13030 / NBRC 101832 / S2 / LL).